The primary structure comprises 380 residues: Erythronate-4-phosphate dehydrogenase (380 aa).

Residues Ser-45 and Thr-66 each contribute to the substrate site. NAD(+) contacts are provided by residues Asp-146, Thr-174, 205 to 207 (ASR), and Asp-231. The active site involves Arg-207. Residue Glu-236 is part of the active site. His-253 (proton donor) is an active-site residue. Gly-256 contacts NAD(+). Residue Tyr-257 coordinates substrate.

This sequence belongs to the D-isomer specific 2-hydroxyacid dehydrogenase family. PdxB subfamily. Homodimer.

It is found in the cytoplasm. It catalyses the reaction 4-phospho-D-erythronate + NAD(+) = (R)-3-hydroxy-2-oxo-4-phosphooxybutanoate + NADH + H(+). It functions in the pathway cofactor biosynthesis; pyridoxine 5'-phosphate biosynthesis; pyridoxine 5'-phosphate from D-erythrose 4-phosphate: step 2/5. Its function is as follows. Catalyzes the oxidation of erythronate-4-phosphate to 3-hydroxy-2-oxo-4-phosphonooxybutanoate. The protein is Erythronate-4-phosphate dehydrogenase of Pseudomonas putida (strain W619).